Here is a 346-residue protein sequence, read N- to C-terminus: MSDAYKNAGVDIEAGYEAVKRMKKHVERTQRLGVMGSLGGFGGMFDLSELPYQKPVLISGTDGVGTKLKLAFSMDKHDTIGVDAVAMCVNDVLAQGAEPLFFLDYLAVGKADPVKIEQIVQGVADGCEQSGSALIGGETAEMPGLYTADEYDIAGFSVGVAEKDEIVTGEHIEEGHLLIGLTSSGLHSNGFSLVRKVLLDDGGLDLDTVYEPFARPLGEELLEPTRIYVKPVLKAVKSGKVDGMAHVTGGGFIENIPRMLPDGLSAEIDHGSWPIPPIFPFLQEHGKLKEEEMFNVFNMGIGFVLAVKEEDLTGVIDTLEAQGEKAYLIGRVKRGEGISFGGAALS.

Belongs to the AIR synthase family.

The protein resides in the cytoplasm. The catalysed reaction is 2-formamido-N(1)-(5-O-phospho-beta-D-ribosyl)acetamidine + ATP = 5-amino-1-(5-phospho-beta-D-ribosyl)imidazole + ADP + phosphate + H(+). It participates in purine metabolism; IMP biosynthesis via de novo pathway; 5-amino-1-(5-phospho-D-ribosyl)imidazole from N(2)-formyl-N(1)-(5-phospho-D-ribosyl)glycinamide: step 2/2. This Bacillus velezensis (strain DSM 23117 / BGSC 10A6 / LMG 26770 / FZB42) (Bacillus amyloliquefaciens subsp. plantarum) protein is Phosphoribosylformylglycinamidine cyclo-ligase.